Reading from the N-terminus, the 420-residue chain is Putative T-box protein 33 (420 aa).

Residues 93 to 291 (LWKELHYLSN…ANPTSRGDAK (199 aa)) constitute a DNA-binding region (T-box). Positions 395–412 (SPPLQPTATSPEASQNQI) are enriched in polar residues. The segment at 395 to 420 (SPPLQPTATSPEASQNQIKLEMNQYM) is disordered.

The protein localises to the nucleus. This chain is Putative T-box protein 33 (tbx-33), found in Caenorhabditis elegans.